The primary structure comprises 755 residues: Cartilage oligomeric matrix protein (755 aa).

A signal peptide spans 1-19 (MGPTACVLVLALAILRATG). The COMP N-terminal stretch occupies residues 21–84 (GQIPLGGDLA…PARTPGLSVR (64 aa)). Positions 85-124 (PVPLCAPGSCFPGVVCSETATGARCGPCPPGYTGNGSHCT) constitute an EGF-like 1 domain. 21 disulfides stabilise this stretch: cysteine 89–cysteine 100, cysteine 94–cysteine 109, cysteine 112–cysteine 123, cysteine 129–cysteine 140, cysteine 134–cysteine 149, cysteine 152–cysteine 176, cysteine 182–cysteine 195, cysteine 189–cysteine 204, cysteine 207–cysteine 219, cysteine 227–cysteine 241, cysteine 235–cysteine 251, cysteine 253–cysteine 264, cysteine 280–cysteine 285, cysteine 290–cysteine 310, cysteine 326–cysteine 346, cysteine 349–cysteine 369, cysteine 385–cysteine 405, cysteine 408–cysteine 428, cysteine 446–cysteine 466, cysteine 482–cysteine 502, and cysteine 518–cysteine 739. The N-linked (GlcNAc...) asparagine glycan is linked to asparagine 119. One can recognise an EGF-like 2; calcium-binding domain in the interval 125–177 (DVNECNAHPCFPRVRCINTSPGFHCEACPPGFSGPTHEGVGLTFAKSNKQVCT). Residues 178–220 (DINECETGQHNCVPNSVCVNTRGSFQCGPCQPGFVGDQTSGCQ) form the EGF-like 3; calcium-binding domain. In terms of domain architecture, EGF-like 4 spans 223 to 265 (GQHFCPDGSPSPCHEKANCVLERDGSRSCVCAVGWAGNGLLCG). 8 TSP type-3 repeats span residues 266-298 (RDTD…NSGQ), 299-334 (EDVD…NPDQ), 335-357 (RNSD…NDDQ), 358-393 (KDTD…NFDQ), 394-416 (SDSD…NPDQ), 417-454 (RDVD…NSAQ), 455-490 (QDSD…NPGQ), and 491-526 (EDND…EVTL). 2 disordered regions span residues 296-341 (SGQE…DSDK) and 353-501 (KNDD…VGDA). Basic and acidic residues-rich tracts occupy residues 332–341 (PDQRNSDSDK) and 353–368 (KNDD…RGDA). Phosphoserine is present on serine 394. Basic and acidic residues-rich tracts occupy residues 412-424 (DNPD…HDFV) and 456-465 (DSDHDGKGDA). Residues 525–755 (TLTDFRAFQT…DYESHRLQRV (231 aa)) form a mediates cell survival and induction of the IAP family of survival proteins region. Residues 530-744 (RAFQTVVLDP…LRYRCNDTIP (215 aa)) form the TSP C-terminal domain. Asparagine 740 carries an N-linked (GlcNAc...) asparagine glycan.

The protein belongs to the thrombospondin family. In terms of assembly, pentamer; disulfide-linked. Exists in a more compact conformation in the presence of calcium and shows a more extended conformation in the absence of calcium. Interacts with ITGB3, ITGA5 and FN1. Binding to FN1 requires the presence of divalent cations (Ca(2+), Mg(2+) or Mn(2+)). The greatest amount of binding is seen in the presence of Mn(2+). Interacts with MATN1, MATN3, MATN4 and ACAN. Binds heparin, heparan sulfate and chondroitin sulfate. EDTA dimishes significantly its binding to ACAN and abolishes its binding to MATN3, MATN4 and chondroitin sulfate. Interacts with collagen I, II and IX, and interaction with these collagens is dependent on the presence of zinc ions. Interacts with ADAMTS12. Interacts with ITGA7. The cofactor is Ca(2+). Proteolytically cleaved by metalloproteases ADAMTS4 and ADAMTS1 with ADAMTS4 showing more potent activity. In terms of tissue distribution, expressed in cartilage, including nasal, knee epiphyseal and rib tissues. Abundantly expressed in chondrocyte and tendon extracellular matrix (at protein level).

The protein localises to the secreted. It localises to the extracellular space. Its subcellular location is the extracellular matrix. Its function is as follows. Plays a role in the structural integrity of cartilage via its interaction with other extracellular matrix proteins such as the collagens and fibronectin. Can mediate the interaction of chondrocytes with the cartilage extracellular matrix through interaction with cell surface integrin receptors. Could play a role in the pathogenesis of osteoarthritis. Potent suppressor of apoptosis in both primary chondrocytes and transformed cells. Suppresses apoptosis by blocking the activation of caspase-3 and by inducing the IAP family of survival proteins (BIRC3, BIRC2, BIRC5 and XIAP). Essential for maintaining a vascular smooth muscle cells (VSMCs) contractile/differentiated phenotype under physiological and pathological stimuli. Maintains this phenotype of VSMCs by interacting with ITGA7. The sequence is that of Cartilage oligomeric matrix protein from Mus musculus (Mouse).